The chain runs to 603 residues: Autophagy-related protein 22 (603 aa).

Transmembrane regions (helical) follow at residues 46–66, 122–142, 157–177, and 181–201; these read YGWAAEVFAVCAMGSFLPITL, TASFAMYTFSISVLIQSVLII, FLLAFALMGALSMILFLFLLP, and LLAAVLAIIANTGFGASFVLL. N-linked (GlcNAc...) asparagine glycosylation occurs at N254. The next 8 membrane-spanning stretches (helical) occupy residues 274–294, 304–324, 342–362, 368–388, 401–421, 439–459, 464–484, and 539–559; these read IGIGYIAAVLVQIGCILLVVA, LVLFIIGLWWLVFTIPAALWL, WAWVSYIVFAWVSLGRTIVRA, VLLFLAAWFLLSDGIATVSGT, IAALGLINVIAMISGVLGAFS, ACICLFEVIPLYGLLGFLPFI, VIGLQQPWEMYVLGAIYGLVL, and AFGFLALLILLPLPLMLLVDV. N582 carries N-linked (GlcNAc...) asparagine glycosylation.

This sequence belongs to the ATG22 family.

It localises to the vacuole membrane. In terms of biological role, vacuolar effluxer which mediate the efflux of amino acids resulting from autophagic degradation. The release of autophagic amino acids allows the maintenance of protein synthesis and viability during nitrogen starvation. The chain is Autophagy-related protein 22 (ATG22) from Coccidioides immitis (strain RS) (Valley fever fungus).